An 835-amino-acid chain; its full sequence is Prickle-like protein 1-A (835 aa).

The PET domain maps to 14 to 122 (FGCQRSSTSD…NIKMLSRAVM (109 aa)). LIM zinc-binding domains follow at residues 124–188 (ATCE…ELLK), 189–249 (PRCS…HYAE), and 250–313 (YCES…EDVH). Disordered regions lie at residues 312 to 346 (VHAS…ADQC), 426 to 455 (LFQQ…QRNN), 603 to 706 (CQEK…RKRS), and 769 to 835 (CSSS…CIIS). Basic and acidic residues-rich tracts occupy residues 432-453 (EDNR…DLQR), 603-614 (CQEKPPPEEKPM), and 646-655 (EIRRPPMSER). 2 stretches are compositionally biased toward basic residues: residues 669-683 (RPHH…KSRK) and 819-835 (SKSK…CIIS). Cysteine methyl ester is present on Cys-832. Cys-832 carries the S-farnesyl cysteine lipid modification. A propeptide spans 833 to 835 (IIS) (removed in mature form).

The protein belongs to the prickle / espinas / testin family. As to quaternary structure, interacts with dvl2/dsh and mapk8/jnk1. Expressed in the dorsal marginal zone of early gastrulae (stage 10). As gastrulation proceeds, expression expands to include the lateral and ventral marginal zones, excluding the few rows of cells above the blastopore lip. Expression moves dorsally with gastrulation cell movements, and by the end of gastrulation expression is seen in dorsal mesoderm and posterior but not anterior neural ectoderm. Expression becomes down-regulated in mesoderm but remains strong in posterior ectoderm through the neurula stages. During tailbud stages, expressed in the pronephric duct, tailbud, tailtip and forming somites. In the most posterior regions, expressed in notochord and in the floorplate of the neural tube with weak expression in the roofplate. At stage 30, expressed in a complex pattern in the head including strong expression in the lens and otic vesicle.

Its subcellular location is the cell membrane. In terms of biological role, acts in a planar cell polarity (PCP) complex; polarization along the apical/basal axis of epithelial cells. Regulates the polarized assembly of fibronectrin on the surface of the mesoderm during gastrulation. Essential for gastrulation cell movements, cooperating with dvl2/dsh to activate jnk. Acts together with tes to control axial elongation. The chain is Prickle-like protein 1-A (prickle1-a) from Xenopus laevis (African clawed frog).